Consider the following 391-residue polypeptide: Cytochrome b (391 aa).

Helical transmembrane passes span 33–53 (FGSL…FLAM), 77–98 (WLIR…YLHI), 113–133 (WSAG…GYVL), and 178–198 (FFAF…VHLL). The heme b site is built by histidine 83 and histidine 97. 2 residues coordinate heme b: histidine 182 and histidine 196. An a ubiquinone-binding site is contributed by histidine 201. A run of 4 helical transmembrane segments spans residues 226–246 (YKDL…VLFI), 288–308 (LGGV…PILH), 320–340 (LAQI…WIGG), and 347–367 (FIII…VFFP).

Belongs to the cytochrome b family. In terms of assembly, the cytochrome bc1 complex contains 3 respiratory subunits (MT-CYB, CYC1 and UQCRFS1), 2 core proteins (UQCRC1 and UQCRC2) and probably 6 low-molecular weight proteins. Requires heme b as cofactor.

The protein resides in the mitochondrion inner membrane. In terms of biological role, component of the ubiquinol-cytochrome c reductase complex (complex III or cytochrome b-c1 complex) that is part of the mitochondrial respiratory chain. The b-c1 complex mediates electron transfer from ubiquinol to cytochrome c. Contributes to the generation of a proton gradient across the mitochondrial membrane that is then used for ATP synthesis. This chain is Cytochrome b (mt-cyb), found in Kryptolebias marmoratus (Mangrove killifish).